The chain runs to 343 residues: Cytoplasmic tRNA 2-thiolation protein 1 (343 aa).

It belongs to the TtcA family. CTU1/NCS6/ATPBD3 subfamily.

It is found in the cytoplasm. It functions in the pathway tRNA modification; 5-methoxycarbonylmethyl-2-thiouridine-tRNA biosynthesis. In terms of biological role, plays a central role in 2-thiolation of mcm(5)S(2)U at tRNA wobble positions of tRNA(Lys), tRNA(Glu) and tRNA(Gln). Directly binds tRNAs and probably acts by catalyzing adenylation of tRNAs, an intermediate required for 2-thiolation. It is unclear whether it acts as a sulfurtransferase that transfers sulfur from thiocarboxylated URM1 onto the uridine of tRNAs at wobble position. In Drosophila willistoni (Fruit fly), this protein is Cytoplasmic tRNA 2-thiolation protein 1.